The chain runs to 238 residues: Ribosomal RNA small subunit methyltransferase G (238 aa).

S-adenosyl-L-methionine-binding positions include G78, 129–130 (AE), and R148.

This sequence belongs to the methyltransferase superfamily. RNA methyltransferase RsmG family.

The protein resides in the cytoplasm. Functionally, specifically methylates the N7 position of a guanine in 16S rRNA. This chain is Ribosomal RNA small subunit methyltransferase G, found in Caldicellulosiruptor bescii (strain ATCC BAA-1888 / DSM 6725 / KCTC 15123 / Z-1320) (Anaerocellum thermophilum).